A 653-amino-acid polypeptide reads, in one-letter code: Acetyl-coenzyme A synthetase (653 aa).

CoA-binding positions include 196 to 199 (RGGK) and Thr-315. ATP is bound by residues 391–393 (GEP), 415–420 (DTWWQT), Asp-506, and Arg-521. CoA is bound at residue Ser-529. Arg-532 is an ATP binding site. Residues Val-543 and Val-548 each contribute to the Mg(2+) site. Lys-618 is modified (N6-acetyllysine).

It belongs to the ATP-dependent AMP-binding enzyme family. The cofactor is Mg(2+). Post-translationally, acetylated. Deacetylation by the SIR2-homolog deacetylase activates the enzyme.

The enzyme catalyses acetate + ATP + CoA = acetyl-CoA + AMP + diphosphate. Functionally, catalyzes the conversion of acetate into acetyl-CoA (AcCoA), an essential intermediate at the junction of anabolic and catabolic pathways. AcsA undergoes a two-step reaction. In the first half reaction, AcsA combines acetate with ATP to form acetyl-adenylate (AcAMP) intermediate. In the second half reaction, it can then transfer the acetyl group from AcAMP to the sulfhydryl group of CoA, forming the product AcCoA. This chain is Acetyl-coenzyme A synthetase, found in Laribacter hongkongensis (strain HLHK9).